A 552-amino-acid polypeptide reads, in one-letter code: Putative transport protein APJL_0985 (552 aa).

The next 5 helical transmembrane spans lie at 4–24, 29–49, 65–85, 95–115, and 161–181; these read IAII…IGHI, VGLG…CTHL, FGLI…FFAS, GFAV…HKLF, and IAYP…RIIF. 2 RCK C-terminal domains span residues 190-275 and 277-360; these read QEFD…ILGE and ADVS…IIGD. 6 helical membrane passes run 370 to 390, 403 to 425, 438 to 458, 463 to 483, 492 to 512, and 529 to 549; these read MLPI…PLYL, GGPL…YWFM, IVLF…DTLL, LAWM…TGFV, YLSL…LAFA, and VYPL…ILLW.

The protein belongs to the AAE transporter (TC 2.A.81) family. YidE subfamily.

Its subcellular location is the cell membrane. The sequence is that of Putative transport protein APJL_0985 from Actinobacillus pleuropneumoniae serotype 3 (strain JL03).